Here is a 116-residue protein sequence, read N- to C-terminus: NADH-ubiquinone oxidoreductase chain 3 (116 aa).

3 helical membrane passes run 3 to 23 (LITT…TVSF), 56 to 76 (FFLI…LLPL), and 87 to 107 (LTLV…IYEW).

The protein belongs to the complex I subunit 3 family.

It is found in the mitochondrion membrane. It catalyses the reaction a ubiquinone + NADH + 5 H(+)(in) = a ubiquinol + NAD(+) + 4 H(+)(out). Its function is as follows. Core subunit of the mitochondrial membrane respiratory chain NADH dehydrogenase (Complex I) that is believed to belong to the minimal assembly required for catalysis. Complex I functions in the transfer of electrons from NADH to the respiratory chain. The immediate electron acceptor for the enzyme is believed to be ubiquinone. This is NADH-ubiquinone oxidoreductase chain 3 (MT-ND3) from Oncorhynchus kisutch (Coho salmon).